The sequence spans 460 residues: Light-independent protochlorophyllide reductase subunit N (460 aa).

Cysteine 22, cysteine 47, and cysteine 107 together coordinate [4Fe-4S] cluster.

The protein belongs to the BchN/ChlN family. As to quaternary structure, protochlorophyllide reductase is composed of three subunits; ChlL, ChlN and ChlB. Forms a heterotetramer of two ChlB and two ChlN subunits. [4Fe-4S] cluster serves as cofactor.

The catalysed reaction is chlorophyllide a + oxidized 2[4Fe-4S]-[ferredoxin] + 2 ADP + 2 phosphate = protochlorophyllide a + reduced 2[4Fe-4S]-[ferredoxin] + 2 ATP + 2 H2O. It participates in porphyrin-containing compound metabolism; chlorophyll biosynthesis (light-independent). Functionally, component of the dark-operative protochlorophyllide reductase (DPOR) that uses Mg-ATP and reduced ferredoxin to reduce ring D of protochlorophyllide (Pchlide) to form chlorophyllide a (Chlide). This reaction is light-independent. The NB-protein (ChlN-ChlB) is the catalytic component of the complex. The chain is Light-independent protochlorophyllide reductase subunit N from Thermosynechococcus vestitus (strain NIES-2133 / IAM M-273 / BP-1).